The primary structure comprises 346 residues: Ly6/PLAUR domain-containing protein 3 (346 aa).

The N-terminal stretch at 1–30 (MDPARKAGAQAMIWTAGWLLLLLLRGGAQA) is a signal peptide. 2 consecutive UPAR/Ly6 domains span residues 33–126 (CYSC…ALDP) and 140–222 (CYSC…SRCN). N-linked (GlcNAc...) asparagine glycans are attached at residues N118, N163, N176, and N183. Positions 233-324 (PRIPPLVRLP…KGGPQQPHNK (92 aa)) are disordered. Residues 234–246 (RIPPLVRLPPPEP) are compositionally biased toward pro residues. Low complexity predominate over residues 247–269 (TTVASTTSVTTSTSAPVRPTSTT). Over residues 283-295 (GVEHEASRDEEPR) the composition is skewed to basic and acidic residues. The GPI-anchor amidated cysteine moiety is linked to residue C326. A propeptide spans 327-346 (VAPTAGLAALLLAVAAGVLL) (removed in mature form).

As to quaternary structure, binds laminin-1 and laminin-5. Interacts with LGALS3. Interacts with AGR2 and AGR3. In terms of processing, N-glycosylated and O-glycosylated. Expressed in placenta, skin and urothelium. Found in suprabasal keratinocytes of chronic wounds. Weak expression is found in esophagus and peripheral blood mononuclear cells. Found in the majority of primary and metastatic transitional cell carcinomas (TCCs) and as well in breast cancer tissues, but not in adjacent normal tissues. High expression is found in the tumor component of some noninvasive superficial lesions and in invasive and metastatic urothelial cancers.

Its subcellular location is the cell membrane. Functionally, supports cell migration. May be involved in urothelial cell-matrix interactions. May be involved in tumor progression. This is Ly6/PLAUR domain-containing protein 3 (LYPD3) from Homo sapiens (Human).